A 186-amino-acid chain; its full sequence is Pyridoxal 5'-phosphate synthase subunit PdxT (186 aa).

Gly47 to Ser49 is an L-glutamine binding site. The active-site Nucleophile is the Cys79. L-glutamine contacts are provided by residues Arg106 and Ile134 to Arg135. Active-site charge relay system residues include His170 and Glu172.

This sequence belongs to the glutaminase PdxT/SNO family. In the presence of PdxS, forms a dodecamer of heterodimers. Only shows activity in the heterodimer.

It carries out the reaction aldehydo-D-ribose 5-phosphate + D-glyceraldehyde 3-phosphate + L-glutamine = pyridoxal 5'-phosphate + L-glutamate + phosphate + 3 H2O + H(+). It catalyses the reaction L-glutamine + H2O = L-glutamate + NH4(+). It participates in cofactor biosynthesis; pyridoxal 5'-phosphate biosynthesis. Functionally, catalyzes the hydrolysis of glutamine to glutamate and ammonia as part of the biosynthesis of pyridoxal 5'-phosphate. The resulting ammonia molecule is channeled to the active site of PdxS. This Methanothrix thermoacetophila (strain DSM 6194 / JCM 14653 / NBRC 101360 / PT) (Methanosaeta thermophila) protein is Pyridoxal 5'-phosphate synthase subunit PdxT.